A 193-amino-acid chain; its full sequence is Probable GTP-binding protein EngB (193 aa).

Residues 20–193 (GVPEVAFAGR…ELAHEISRCI (174 aa)) enclose the EngB-type G domain. GTP-binding positions include 28 to 35 (GRSNVGKS), 55 to 59 (GSTRQ), 73 to 76 (DLPG), 140 to 143 (TKAD), and 171 to 176 (IMWVSS). 2 residues coordinate Mg(2+): S35 and T57.

It belongs to the TRAFAC class TrmE-Era-EngA-EngB-Septin-like GTPase superfamily. EngB GTPase family. Requires Mg(2+) as cofactor.

Necessary for normal cell division and for the maintenance of normal septation. This chain is Probable GTP-binding protein EngB, found in Anaplasma phagocytophilum (strain HZ).